The sequence spans 446 residues: N-succinylarginine dihydrolase (446 aa).

Residues 19–28 (AGLSFGNVAS), Asn110, and 137–138 (HR) contribute to the substrate site. The active site involves Glu174. A substrate-binding site is contributed by Arg213. Residue His249 is part of the active site. Substrate contacts are provided by Asp251 and Asn364. The active-site Nucleophile is the Cys370.

It belongs to the succinylarginine dihydrolase family. In terms of assembly, homodimer.

The enzyme catalyses N(2)-succinyl-L-arginine + 2 H2O + 2 H(+) = N(2)-succinyl-L-ornithine + 2 NH4(+) + CO2. It participates in amino-acid degradation; L-arginine degradation via AST pathway; L-glutamate and succinate from L-arginine: step 2/5. In terms of biological role, catalyzes the hydrolysis of N(2)-succinylarginine into N(2)-succinylornithine, ammonia and CO(2). The chain is N-succinylarginine dihydrolase from Burkholderia pseudomallei (strain 668).